The chain runs to 468 residues: Zinc transporter SLC39A7 (468 aa).

The chain crosses the membrane as a helical span at residues 10–30; that stretch reads WVAVGLLTWAALGLLVAGHEG. 2 stretches are compositionally biased toward basic and acidic residues: residues 36 to 56 and 64 to 100; these read RDVEEDFHGHSHGHSHEDFHH and HTHESIWHGHAHSHDHGHSREDVHHGHSHGHSHDSLH. The tract at residues 36–116 is disordered; sequence RDVEEDFHGH…SHGASREAGA (81 aa). Residue His-64 is modified to Pros-methylhistidine. The next 3 helical transmembrane spans lie at 132-152, 163-183, and 208-228; these read ALGATVLISAAPFFVLFLIPV, LQILLSFASGGLLGDAFLHLI, and GPILSVGLWVLSGIVAFLVVE. A compositionally biased stretch (basic residues) spans 237–248; that stretch reads GHGHAHAHGHGH. The interval 237 to 313 is disordered; sequence GHGHAHAHGH…NPEEEKTGSD (77 aa). The segment covering 249 to 312 has biased composition (basic and acidic residues); that stretch reads SHGDSHAHGH…QNPEEEKTGS (64 aa). A run of 3 helical transmembrane segments spans residues 385-405, 409-429, and 447-467; these read LTAIGALAGTACALLTEGGAV, VAGGAGPGWVLPFTAGGFIYV, and SLLEVLGLLGGVAMMVLIAHL.

The protein belongs to the ZIP transporter (TC 2.A.5) family. KE4/Catsup subfamily. As to quaternary structure, homodimer. In terms of processing, rapidly phosphorylated by CK2 following Zn(2+) treatment. This phosphorylation is required for efficient cytosolic Zn(2+) release.

It localises to the endoplasmic reticulum membrane. The protein localises to the golgi apparatus. The protein resides in the cis-Golgi network membrane. It carries out the reaction Zn(2+)(in) = Zn(2+)(out). Transports Zn(2+) from the endoplasmic reticulum (ER)/Golgi apparatus to the cytosol, playing an essential role in the regulation of cytosolic zinc levels. Acts as a gatekeeper of zinc release from intracellular stores, requiring post-translational activation by phosphorylation on residues, resulting in activation of multiple downstream pathways leading to cell growth and proliferation. Has an essential role in B cell development and is required for proper B cell receptor signaling. Plays an important role in maintaining intestinal epithelial homeostasis and skin dermis development by regulating ER function. Controls cell signaling pathways involved in glucose metabolism in skeletal muscle. Has a protective role against ER stress in different biological contexts. Mediates Zn(2+)-induced ferroptosis. The polypeptide is Zinc transporter SLC39A7 (Rattus norvegicus (Rat)).